The primary structure comprises 123 residues: Small ribosomal subunit protein uS12cz/uS12cy (123 aa).

The protein belongs to the universal ribosomal protein uS12 family. As to quaternary structure, part of the 30S ribosomal subunit.

It localises to the plastid. The protein localises to the chloroplast. Its function is as follows. With S4 and S5 plays an important role in translational accuracy. Located at the interface of the 30S and 50S subunits. This chain is Small ribosomal subunit protein uS12cz/uS12cy (rps12-A), found in Coffea arabica (Arabian coffee).